The following is a 357-amino-acid chain: 3-isopropylmalate dehydrogenase (357 aa).

Substrate contacts are provided by arginine 99, arginine 109, arginine 133, and aspartate 223. Positions 223, 247, and 251 each coordinate Mg(2+). Position 283-295 (283-295 (GSAPDIAGEQRAD)) interacts with NAD(+).

It belongs to the isocitrate and isopropylmalate dehydrogenases family. LeuB type 2 subfamily. In terms of assembly, homodimer. It depends on Mg(2+) as a cofactor. Requires Mn(2+) as cofactor.

The protein resides in the cytoplasm. It carries out the reaction (2R,3S)-3-isopropylmalate + NAD(+) = 4-methyl-2-oxopentanoate + CO2 + NADH. It functions in the pathway amino-acid biosynthesis; L-leucine biosynthesis; L-leucine from 3-methyl-2-oxobutanoate: step 3/4. Catalyzes the oxidation of 3-carboxy-2-hydroxy-4-methylpentanoate (3-isopropylmalate) to 3-carboxy-4-methyl-2-oxopentanoate. The product decarboxylates to 4-methyl-2 oxopentanoate. The chain is 3-isopropylmalate dehydrogenase from Leifsonia xyli subsp. xyli (strain CTCB07).